Consider the following 80-residue polypeptide: Protein FAM229B (80 aa).

The tract at residues 1 to 45 is disordered; it reads MPFRFGTQPRRFPVEGGDSSIELESGLSSSASCTGKETSPNRQLR. The span at 15–32 shows a compositional bias: low complexity; that stretch reads EGGDSSIELESGLSSSAS. The span at 33-42 shows a compositional bias: polar residues; that stretch reads CTGKETSPNR.

Belongs to the FAM229 family.

The chain is Protein FAM229B (Fam229b) from Mus musculus (Mouse).